A 619-amino-acid polypeptide reads, in one-letter code: Replication restart protein PriA (619 aa).

Positions 119-285 (LKELQKHSAS…KDKALVRLKG (167 aa)) constitute a Helicase ATP-binding domain. 132–139 (GDTGSGKT) serves as a coordination point for ATP. A DEAH box motif is present at residues 228-231 (DEEH). Residues cysteine 336, cysteine 339, cysteine 345, cysteine 348, cysteine 363, cysteine 366, cysteine 376, and cysteine 379 each coordinate Zn(2+). The 162-residue stretch at 371 to 532 (PIPKICSACQ…ELYPPFSRLC (162 aa)) folds into the Helicase C-terminal domain.

The protein belongs to the helicase family. PriA subfamily. As to quaternary structure, component of the replication restart primosome. Zn(2+) is required as a cofactor.

The catalysed reaction is Couples ATP hydrolysis with the unwinding of duplex DNA by translocating in the 3'-5' direction.. The enzyme catalyses ATP + H2O = ADP + phosphate + H(+). Functionally, initiates the restart of stalled replication forks, which reloads the replicative helicase on sites other than the origin of replication. Recognizes and binds to abandoned replication forks and remodels them to uncover a helicase loading site. Promotes assembly of the primosome at these replication forks. In terms of biological role, important for survival of the bacteria in host cells. This chain is Replication restart protein PriA, found in Helicobacter pylori (strain ATCC 700392 / 26695) (Campylobacter pylori).